The primary structure comprises 182 residues: Inorganic pyrophosphatase (182 aa).

Lys-30, Arg-44, and Tyr-56 together coordinate substrate. Residues Asp-66, Asp-71, and Asp-103 each contribute to the Mg(2+) site. A substrate-binding site is contributed by Tyr-142.

It belongs to the PPase family. As to quaternary structure, homohexamer. Requires Mg(2+) as cofactor.

The protein resides in the cytoplasm. It carries out the reaction diphosphate + H2O = 2 phosphate + H(+). Catalyzes the hydrolysis of inorganic pyrophosphate (PPi) forming two phosphate ions. In Buchnera aphidicola subsp. Acyrthosiphon pisum (strain APS) (Acyrthosiphon pisum symbiotic bacterium), this protein is Inorganic pyrophosphatase.